The primary structure comprises 545 residues: Transducer protein Htr7 (545 aa).

3 helical membrane-spanning segments follow: residues Ala-10–Leu-30, Phe-44–Leu-64, and Pro-80–Val-100. The disordered stretch occupies residues Ala-111–Ala-157. Over residues Glu-123–Ala-157 the composition is skewed to basic and acidic residues. The HAMP domain maps to Ala-164–Asp-217. One can recognise a Methyl-accepting transducer domain in the interval Gly-236 to Ala-476. Glu-281 is modified (glutamate methyl ester (Glu)). The disordered stretch occupies residues Leu-521–Asp-545. A compositionally biased stretch (low complexity) spans Glu-527 to Ala-539.

This sequence belongs to the methyl-accepting chemotaxis (MCP) protein family. Methylated by CheR.

It localises to the cell membrane. Its function is as follows. Potentially involved in chemo- or phototactic signal transduction. The protein is Transducer protein Htr7 (htr7) of Halobacterium salinarum (strain ATCC 29341 / DSM 671 / R1).